Here is a 289-residue protein sequence, read N- to C-terminus: Phosphatidylinositol:ceramide inositolphosphotransferase 3 (289 aa).

5 helical membrane passes run 33-53 (LVLA…GVHY), 77-97 (AFFS…WTFH), 115-135 (VFVY…ATQL), 169-189 (VIYG…LVFV), and 199-219 (RWIK…IIAS). Histidine 181 is a catalytic residue. Residues histidine 222 and aspartate 226 contribute to the active site. The helical transmembrane segment at 223–243 (YTVDIVVAWYTVNLVMFYVDS) threads the bilayer. Residues 249–289 (AERSSGPSPTPLLPLSTKDSKNKSKEDHQRLLNENNVADDH) form a disordered region. Basic and acidic residues predominate over residues 266-279 (KDSKNKSKEDHQRL). Positions 280–289 (LNENNVADDH) are enriched in polar residues.

This sequence belongs to the sphingomyelin synthase family. Mostly expressed in stems and flowers, and, to a lower extent, in leaves, roots and siliques.

Its subcellular location is the membrane. Catalyzes the transfer of the phosphorylinositol group from phosphatidylinositol (PI) to phytoceramide, an essential step in sphingolipid biosynthesis. This is Phosphatidylinositol:ceramide inositolphosphotransferase 3 (IPCS3) from Arabidopsis thaliana (Mouse-ear cress).